The chain runs to 234 residues: uncharacterized protein (234 aa).

This is an uncharacterized protein from Acheta domesticus (House cricket).